Here is a 396-residue protein sequence, read N- to C-terminus: UPF0046 protein T07D4.2 (396 aa).

The interval 73-94 (SRRGSIASGIPMDKKTRRKLSN) is disordered.

This sequence belongs to the UPF0046 family.

This chain is UPF0046 protein T07D4.2, found in Caenorhabditis elegans.